Here is a 510-residue protein sequence, read N- to C-terminus: 2,3-bisphosphoglycerate-independent phosphoglycerate mutase (510 aa).

Mn(2+) contacts are provided by Asp12 and Ser62. Ser62 serves as the catalytic Phosphoserine intermediate. Residues His123, 153–154 (RD), Arg185, Arg191, 260–263 (RPDR), and Lys333 each bind substrate. 5 residues coordinate Mn(2+): Asp400, His404, Asp441, His442, and His460.

Belongs to the BPG-independent phosphoglycerate mutase family. In terms of assembly, monomer. Requires Mn(2+) as cofactor.

It catalyses the reaction (2R)-2-phosphoglycerate = (2R)-3-phosphoglycerate. It participates in carbohydrate degradation; glycolysis; pyruvate from D-glyceraldehyde 3-phosphate: step 3/5. Catalyzes the interconversion of 2-phosphoglycerate and 3-phosphoglycerate. The protein is 2,3-bisphosphoglycerate-independent phosphoglycerate mutase of Clostridium acetobutylicum (strain ATCC 824 / DSM 792 / JCM 1419 / IAM 19013 / LMG 5710 / NBRC 13948 / NRRL B-527 / VKM B-1787 / 2291 / W).